We begin with the raw amino-acid sequence, 216 residues long: Probable nicotinate-nucleotide adenylyltransferase (216 aa).

This sequence belongs to the NadD family.

It carries out the reaction nicotinate beta-D-ribonucleotide + ATP + H(+) = deamido-NAD(+) + diphosphate. The protein operates within cofactor biosynthesis; NAD(+) biosynthesis; deamido-NAD(+) from nicotinate D-ribonucleotide: step 1/1. In terms of biological role, catalyzes the reversible adenylation of nicotinate mononucleotide (NaMN) to nicotinic acid adenine dinucleotide (NaAD). The protein is Probable nicotinate-nucleotide adenylyltransferase of Pelobacter propionicus (strain DSM 2379 / NBRC 103807 / OttBd1).